Reading from the N-terminus, the 309-residue chain is COP9 signalosome complex subunit 6 (309 aa).

One can recognise an MPN domain in the interval 28–161; the sequence is VDLHPLVLIN…VIIYESELHI (134 aa).

The protein belongs to the peptidase M67A family. CSN6 subfamily. As to quaternary structure, component of the CSN complex. The holocomplex is comprised of 8 subunits csn1-8. In the complex, it probably interacts directly with csn2, csn5 and csn7.

Its subcellular location is the cytoplasm. It is found in the nucleus. The protein resides in the cytoplasmic vesicle. The protein localises to the phagosome. Functionally, component of the COP9 signalosome complex (CSN), a complex involved in various cellular and developmental processes. The CSN complex is an essential regulator of the ubiquitin (Ubl) conjugation pathway by mediating the deneddylation of the cullin subunits of E3 ligase complexes, leading to modify the Ubl ligase activity. This is COP9 signalosome complex subunit 6 (csn6) from Dictyostelium discoideum (Social amoeba).